Here is an 87-residue protein sequence, read N- to C-terminus: Phospholemman (87 aa).

The signal sequence occupies residues 1-20 (MASLSHILVLWVGILTVVNA). At 21 to 35 (EAPQEHDPFTYDYQS) the chain is on the extracellular side. The helical transmembrane segment at 36–56 (LRIGGLIIAGILFILGILIVL) threads the bilayer. Over 57–87 (SRRCRCKFNQQQSLGKMRSPHLAAQFSSESC) the chain is Cytoplasmic. Residue Cys60 is the site of S-palmitoyl cysteine attachment. Cys62 is subject to S-glutathionyl cysteine; alternate. Cys62 is lipidated: S-palmitoyl cysteine; alternate. Ser75 carries the post-translational modification Phosphoserine; by PKA and PKC. Residue Ser83 is modified to Phosphoserine; by PKA.

This sequence belongs to the FXYD family. In terms of assembly, homotetramer. Monomer. Regulatory subunit of the sodium/potassium-transporting ATPase (NKA) which is composed of a catalytic alpha subunit, a non-catalytic beta subunit and an additional regulatory subunit. The monomeric form associates with NKA while the oligomeric form does not. Interacts with the catalytic alpha-1 subunit ATP1A1. Also interacts with the catalytic alpha-2 and alpha-3 subunits ATP1A2 and ATP1A3. Very little interaction with ATP1A1, ATP1A2 or ATP1A3 when phosphorylated at Ser-83. Interacts with the non-catalytic beta-1 subunit ATP1B1. Oxidative stress decreases interaction with ATP1A1 but increases interaction with ATP1B1. Post-translationally, major plasma membrane substrate for cAMP-dependent protein kinase (PKA) and protein kinase C (PKC) in several different tissues. Phosphorylated in response to insulin and adrenergic stimulation. Phosphorylation at Ser-83 stimulates sodium/potassium-transporting ATPase activity while the unphosphorylated form inhibits sodium/potassium-transporting ATPase activity. Phosphorylation increases tetramerization, decreases binding to ATP1A1 and reduces inhibition of ATP1A1 activity. Phosphorylation at Ser-75 leads to greatly reduced interaction with ATP1A1, ATP1A2 and ATP1A3. May be phosphorylated by DMPK. In terms of processing, palmitoylation increases half-life and stability and is enhanced upon phosphorylation at Ser-83 by PKA.

Its subcellular location is the cell membrane. The protein localises to the sarcolemma. It is found in the apical cell membrane. It localises to the membrane. The protein resides in the caveola. Its subcellular location is the T-tubule. Its function is as follows. Associates with and regulates the activity of the sodium/potassium-transporting ATPase (NKA) which transports Na(+) out of the cell and K(+) into the cell. Inhibits NKA activity in its unphosphorylated state and stimulates activity when phosphorylated. Reduces glutathionylation of the NKA beta-1 subunit ATP1B1, thus reversing glutathionylation-mediated inhibition of ATP1B1. Contributes to female sexual development by maintaining the excitability of neurons which secrete gonadotropin-releasing hormone. The sequence is that of Phospholemman from Sus scrofa (Pig).